Reading from the N-terminus, the 883-residue chain is Phosphoenolpyruvate carboxylase (883 aa).

Active-site residues include H138 and K546.

The protein belongs to the PEPCase type 1 family. It depends on Mg(2+) as a cofactor.

It catalyses the reaction oxaloacetate + phosphate = phosphoenolpyruvate + hydrogencarbonate. In terms of biological role, forms oxaloacetate, a four-carbon dicarboxylic acid source for the tricarboxylic acid cycle. This chain is Phosphoenolpyruvate carboxylase, found in Shigella flexneri.